A 175-amino-acid chain; its full sequence is Shikimate kinase (175 aa).

16–21 lines the ATP pocket; that stretch reads GAGKST. S20 serves as a coordination point for Mg(2+). D38, R62, and G84 together coordinate substrate. Residue R122 coordinates ATP. Residue R141 participates in substrate binding.

It belongs to the shikimate kinase family. As to quaternary structure, monomer. Requires Mg(2+) as cofactor.

The protein localises to the cytoplasm. The enzyme catalyses shikimate + ATP = 3-phosphoshikimate + ADP + H(+). It participates in metabolic intermediate biosynthesis; chorismate biosynthesis; chorismate from D-erythrose 4-phosphate and phosphoenolpyruvate: step 5/7. Catalyzes the specific phosphorylation of the 3-hydroxyl group of shikimic acid using ATP as a cosubstrate. The chain is Shikimate kinase from Legionella pneumophila (strain Paris).